Consider the following 493-residue polypeptide: NADH-quinone oxidoreductase subunit N 2 (493 aa).

The next 14 membrane-spanning stretches (helical) occupy residues 16 to 36, 45 to 65, 87 to 107, 119 to 139, 141 to 161, 176 to 196, 219 to 239, 258 to 278, 285 to 305, 313 to 333, 340 to 360, 385 to 405, 421 to 441, and 464 to 484; these read IIPA…DFLI, FLLI…FRQQ, GFAI…AIVS, GEYY…ATGT, LITL…MVGF, LLLG…MYGI, VFLA…AVPF, LSVA…LGPL, WEPL…LAAI, LLAY…VAGN, IAVY…VIIA, AFLM…AGFL, GLAI…FKIV, and CALA…EPFL.

This sequence belongs to the complex I subunit 2 family. NDH-1 is composed of 14 different subunits. Subunits NuoA, H, J, K, L, M, N constitute the membrane sector of the complex.

The protein localises to the cell inner membrane. The catalysed reaction is a quinone + NADH + 5 H(+)(in) = a quinol + NAD(+) + 4 H(+)(out). Functionally, NDH-1 shuttles electrons from NADH, via FMN and iron-sulfur (Fe-S) centers, to quinones in the respiratory chain. The immediate electron acceptor for the enzyme in this species is believed to be ubiquinone. Couples the redox reaction to proton translocation (for every two electrons transferred, four hydrogen ions are translocated across the cytoplasmic membrane), and thus conserves the redox energy in a proton gradient. The chain is NADH-quinone oxidoreductase subunit N 2 from Solibacter usitatus (strain Ellin6076).